The following is a 154-amino-acid chain: Pro-corazonin (154 aa).

Residues 1-19 (MLRLLLLPLFLFTLSMCMG) form the signal peptide. Position 20 is a pyrrolidone carboxylic acid (glutamine 20). Asparagine 30 carries the post-translational modification Asparagine amide. Residues 70–154 (LERCLSQLQR…SAEPNVFGKH (85 aa)) constitute a propeptide that is removed on maturation. Residues 91 to 119 (DFNANRVDPDPENSAHPRLSNSNGENVLY) are disordered. Residues 109-119 (LSNSNGENVLY) show a composition bias toward polar residues.

It belongs to the corazonin family. In terms of tissue distribution, from late embryo to larva, expression is consistently detected in three neuronal groups: dorso-lateral neurons (DL), dorso-medial neurons (DM), and neurons in the ventral nerve cord (vCrz). Both the vCrz and DM groups die via programmed cell death during metamorphosis, whereas the DL neurons persist to adulthood. In adults, expression is seen in a cluster of six to eight neurons per lobe in the pars lateralis (DLP), in numerous neuronal cells in the optic lobes, and in a novel group of four abdominal ganglionic neurons present only in males (ms-aCrz). Projections of the ms-aCrz neurons terminate within the ventral nerve cord, implying a role as interneurons. Terminals of the DLP neurons are found in the retrocerebral complex that produces juvenile hormone and adipokinetic hormone, located in the vicinity of terminals emanating from PDF-containing pacemaking neurons.

The protein resides in the secreted. Cardioactive peptide. Corazonin is probably involved in the physiological regulation of the heart beat. Clock (Clk) and cycle (cyc) proteins negatively regulate Crz transcription in a cell-specific manner. The protein is Pro-corazonin (Crz) of Drosophila melanogaster (Fruit fly).